The following is a 521-amino-acid chain: Bifunctional purine biosynthesis protein PurH (521 aa).

In terms of domain architecture, MGS-like spans 1–145 (MIKQALISVS…KNHRDVTVVV (145 aa)).

The protein belongs to the PurH family.

It carries out the reaction (6R)-10-formyltetrahydrofolate + 5-amino-1-(5-phospho-beta-D-ribosyl)imidazole-4-carboxamide = 5-formamido-1-(5-phospho-D-ribosyl)imidazole-4-carboxamide + (6S)-5,6,7,8-tetrahydrofolate. The catalysed reaction is IMP + H2O = 5-formamido-1-(5-phospho-D-ribosyl)imidazole-4-carboxamide. Its pathway is purine metabolism; IMP biosynthesis via de novo pathway; 5-formamido-1-(5-phospho-D-ribosyl)imidazole-4-carboxamide from 5-amino-1-(5-phospho-D-ribosyl)imidazole-4-carboxamide (10-formyl THF route): step 1/1. The protein operates within purine metabolism; IMP biosynthesis via de novo pathway; IMP from 5-formamido-1-(5-phospho-D-ribosyl)imidazole-4-carboxamide: step 1/1. The polypeptide is Bifunctional purine biosynthesis protein PurH (Burkholderia pseudomallei (strain 1710b)).